A 122-amino-acid chain; its full sequence is Large ribosomal subunit protein uL14 (122 aa).

It belongs to the universal ribosomal protein uL14 family. As to quaternary structure, part of the 50S ribosomal subunit. Forms a cluster with proteins L3 and L19. In the 70S ribosome, L14 and L19 interact and together make contacts with the 16S rRNA in bridges B5 and B8.

Functionally, binds to 23S rRNA. Forms part of two intersubunit bridges in the 70S ribosome. This Mycobacterium sp. (strain KMS) protein is Large ribosomal subunit protein uL14.